The chain runs to 92 residues: Small ribosomal subunit protein bS18 (92 aa).

This sequence belongs to the bacterial ribosomal protein bS18 family. As to quaternary structure, part of the 30S ribosomal subunit. Forms a tight heterodimer with protein bS6.

Functionally, binds as a heterodimer with protein bS6 to the central domain of the 16S rRNA, where it helps stabilize the platform of the 30S subunit. The sequence is that of Small ribosomal subunit protein bS18 from Cupriavidus necator (strain ATCC 17699 / DSM 428 / KCTC 22496 / NCIMB 10442 / H16 / Stanier 337) (Ralstonia eutropha).